Here is a 283-residue protein sequence, read N- to C-terminus: Probable endonuclease 4 (283 aa).

His67, His107, Glu144, Asp178, His181, His215, Asp228, His230, and Glu260 together coordinate Zn(2+).

This sequence belongs to the AP endonuclease 2 family. It depends on Zn(2+) as a cofactor.

The catalysed reaction is Endonucleolytic cleavage to 5'-phosphooligonucleotide end-products.. Endonuclease IV plays a role in DNA repair. It cleaves phosphodiester bonds at apurinic or apyrimidinic (AP) sites, generating a 3'-hydroxyl group and a 5'-terminal sugar phosphate. In Geobacter sp. (strain M21), this protein is Probable endonuclease 4.